A 156-amino-acid chain; its full sequence is ATP synthase subunit b (156 aa).

Residues 7–27 (LIGQTVAFIIFVWFCMKFVWP) traverse the membrane as a helical segment.

It belongs to the ATPase B chain family. In terms of assembly, F-type ATPases have 2 components, F(1) - the catalytic core - and F(0) - the membrane proton channel. F(1) has five subunits: alpha(3), beta(3), gamma(1), delta(1), epsilon(1). F(0) has three main subunits: a(1), b(2) and c(10-14). The alpha and beta chains form an alternating ring which encloses part of the gamma chain. F(1) is attached to F(0) by a central stalk formed by the gamma and epsilon chains, while a peripheral stalk is formed by the delta and b chains.

It localises to the cell inner membrane. F(1)F(0) ATP synthase produces ATP from ADP in the presence of a proton or sodium gradient. F-type ATPases consist of two structural domains, F(1) containing the extramembraneous catalytic core and F(0) containing the membrane proton channel, linked together by a central stalk and a peripheral stalk. During catalysis, ATP synthesis in the catalytic domain of F(1) is coupled via a rotary mechanism of the central stalk subunits to proton translocation. Functionally, component of the F(0) channel, it forms part of the peripheral stalk, linking F(1) to F(0). This Shewanella oneidensis (strain ATCC 700550 / JCM 31522 / CIP 106686 / LMG 19005 / NCIMB 14063 / MR-1) protein is ATP synthase subunit b.